The sequence spans 976 residues: Synaptonemal complex protein 1 (976 aa).

The Mediates head to head self-assembly of N-terminal ends motif lies at 101–111; it reads GLSRVYSKLYK. Positions 117–120 match the Nuclear localization signal motif; sequence KKWK. An interaction with SYCE3 region spans residues 206–362; that stretch reads ETRQVYMDLN…CQLTEEKETQ (157 aa). Coiled coils occupy residues 211-316, 391-439, 499-685, and 739-798; these read YMDL…SIEK, LRTE…LKKV, VKDL…VEKA, and EQEQ…KTQT. The segment at 676 to 770 is required for pH-induced assembly of C-terminal ends into antiparallel tetramers; that stretch reads ENLLEEVEKA…LSVKKQLEIE (95 aa). Positions 679-682 match the Nuclear localization signal motif; the sequence is LEEV. The DNA-binding stretch occupies residues 784–976; sequence NTATLKEKKD…KLKEAEKLFV (193 aa). The Nuclear localization signal signature appears at 880–883; it reads KKRK.

In terms of assembly, structural component of synaptonemal complexes. Homotetramer that consists of an N-terminal four-helical bundle that bifurcates into two elongated C-terminal dimeric coiled coils. This tetrameric building block potentially self-assembles into a supramolecular zipper-like lattice to mediate meiotic chromosome synapsis. Self-assembly is likely initiated by local proton density at chromosome axis, which is predicted to trigger antiparallel back to back assembly of adjacent C-terminal ends into tetrameric structures that anchor to chromosomal DNA. Then the N-terminal ends are predicted to undergo cooperative antiparallel head to head assembly at the midline of synaptonemal complexes central element to form a zipper-like lattice between properly aligned homologous chromosomes. The nascent synapsis generated by SYCP1 is stabilized through interaction with central element proteins SYCE1 and SYCE2. Interacts (via tetrameric core) with SYCE3; the interaction remodels SYCP1 homotetramers to 2:1 heterotrimers with SYCE3. SYCP1/SYCE3 heterotrimers form lattice assemblies as part of the mature synaptonemal complex via both lateral and head-to-head interactions. Forms a complex with EWSR1, PRDM9, SYCP3 and REC8; complex formation is dependent of phosphorylated form of REC8 and requires PRDM9 bound to hotspot DNA; EWSR1 joins PRDM9 with the chromosomal axis through REC8. Interacts with SPO16. As to expression, testis.

It localises to the nucleus. The protein localises to the chromosome. Its subcellular location is the centromere. In terms of biological role, major component of the transverse filaments of synaptonemal complexes, formed between homologous chromosomes during meiotic prophase. Required for normal assembly of the central element of the synaptonemal complexes. Required for normal centromere pairing during meiosis. Required for normal meiotic chromosome synapsis during oocyte and spermatocyte development and for normal male and female fertility. The protein is Synaptonemal complex protein 1 of Homo sapiens (Human).